Reading from the N-terminus, the 30-residue chain is Cycloviolacin-H4 (30 aa).

The segment at residues 1–30 (GIPCAESCVWIPCTVTALLGCSCSNNVCYN) is a cross-link (cyclopeptide (Gly-Asn)). Intrachain disulfides connect Cys4-Cys21, Cys8-Cys23, and Cys13-Cys28.

In terms of processing, this is a cyclic peptide.

Functionally, probably participates in a plant defense mechanism. Has potent hemolytic activity. This is Cycloviolacin-H4 from Viola hederacea (Australian violet).